A 190-amino-acid chain; its full sequence is Putative manganese efflux pump MntP (190 aa).

A run of 6 helical transmembrane segments spans residues Phe-3 to Val-23, Leu-37 to Ile-57, His-72 to Trp-88, Ile-111 to Val-131, Val-138 to His-158, and Phe-164 to Val-184.

It belongs to the MntP (TC 9.B.29) family.

The protein localises to the cell membrane. Its function is as follows. Probably functions as a manganese efflux pump. The chain is Putative manganese efflux pump MntP from Corynebacterium glutamicum (strain R).